We begin with the raw amino-acid sequence, 157 residues long: 6,7-dimethyl-8-ribityllumazine synthase (157 aa).

5-amino-6-(D-ribitylamino)uracil is bound by residues phenylalanine 22, 57–59 (AYE), and 81–83 (TVI). 86 to 87 (GT) lines the (2S)-2-hydroxy-3-oxobutyl phosphate pocket. The Proton donor role is filled by histidine 89. A 5-amino-6-(D-ribitylamino)uracil-binding site is contributed by phenylalanine 114. Arginine 128 contacts (2S)-2-hydroxy-3-oxobutyl phosphate.

The protein belongs to the DMRL synthase family. Forms an icosahedral capsid composed of 60 subunits, arranged as a dodecamer of pentamers.

The catalysed reaction is (2S)-2-hydroxy-3-oxobutyl phosphate + 5-amino-6-(D-ribitylamino)uracil = 6,7-dimethyl-8-(1-D-ribityl)lumazine + phosphate + 2 H2O + H(+). It functions in the pathway cofactor biosynthesis; riboflavin biosynthesis; riboflavin from 2-hydroxy-3-oxobutyl phosphate and 5-amino-6-(D-ribitylamino)uracil: step 1/2. In terms of biological role, catalyzes the formation of 6,7-dimethyl-8-ribityllumazine by condensation of 5-amino-6-(D-ribitylamino)uracil with 3,4-dihydroxy-2-butanone 4-phosphate. This is the penultimate step in the biosynthesis of riboflavin. In Histophilus somni (strain 129Pt) (Haemophilus somnus), this protein is 6,7-dimethyl-8-ribityllumazine synthase.